The following is a 499-amino-acid chain: Acetylcholine receptor subunit alpha-type acr-16 (499 aa).

The signal sequence occupies residues 1-19 (MSSVCALLLSCALFLVAHG). The Extracellular portion of the chain corresponds to 20–232 (SLQERRLYED…LHMRRRTLYY (213 aa)). N-linked (GlcNAc...) asparagine glycans are attached at residues asparagine 43 and asparagine 93. 2 disulfides stabilise this stretch: cysteine 147/cysteine 161 and cysteine 211/cysteine 212. A run of 3 helical transmembrane segments spans residues 233–253 (GFNLIMPCILTTLMTLLGFTL), 261–281 (ITLQITVLLSICFFLSIVSEM), and 289–309 (VPLLGIFFTCCMIVVTASTVF). The Cytoplasmic portion of the chain corresponds to 310-473 (TVYVLNLHYR…WKFAAMVVDR (164 aa)). Residues 474 to 494 (LCLYVFTIFIIASTIGIFWSA) traverse the membrane as a helical segment. At 495–499 (PYLVA) the chain is on the extracellular side.

The protein belongs to the ligand-gated ion channel (TC 1.A.9) family. Acetylcholine receptor (TC 1.A.9.1) subfamily.

The protein resides in the postsynaptic cell membrane. Its subcellular location is the cell membrane. In terms of biological role, after binding acetylcholine, the AChR responds by an extensive change in conformation that affects all subunits and leads to opening of an ion-conducting channel across the plasma membrane. A subunit of the levamisole-insensitive nicotinic receptor. The sequence is that of Acetylcholine receptor subunit alpha-type acr-16 from Caenorhabditis briggsae.